The chain runs to 179 residues: Translation initiation factor IF-3 (179 aa).

It belongs to the IF-3 family. In terms of assembly, monomer.

The protein localises to the cytoplasm. In terms of biological role, IF-3 binds to the 30S ribosomal subunit and shifts the equilibrium between 70S ribosomes and their 50S and 30S subunits in favor of the free subunits, thus enhancing the availability of 30S subunits on which protein synthesis initiation begins. The polypeptide is Translation initiation factor IF-3 (Proteus hauseri).